The sequence spans 308 residues: Large ribosomal subunit protein mL38 (308 aa).

A mitochondrion-targeting transit peptide spans 1–17 (MKRVWPRIPTISNVCRA).

This sequence belongs to the phosphatidylethanolamine-binding protein family. Mitochondrion-specific ribosomal protein mL38 subfamily. As to quaternary structure, component of the mitochondrial large ribosomal subunit (mt-LSU). Mature yeast 74S mitochondrial ribosomes consist of a small (37S) and a large (54S) subunit. The 37S small subunit contains a 15S ribosomal RNA (15S mt-rRNA) and at least 32 different proteins. The 54S large subunit contains a 21S rRNA (21S mt-rRNA) and at least 45 different proteins.

The protein localises to the mitochondrion. Functionally, component of the mitochondrial ribosome (mitoribosome), a dedicated translation machinery responsible for the synthesis of mitochondrial genome-encoded proteins, including at least some of the essential transmembrane subunits of the mitochondrial respiratory chain. The mitoribosomes are attached to the mitochondrial inner membrane and translation products are cotranslationally integrated into the membrane. The chain is Large ribosomal subunit protein mL38 (mrpl35) from Schizosaccharomyces pombe (strain 972 / ATCC 24843) (Fission yeast).